Reading from the N-terminus, the 644-residue chain is Exoribonuclease 2 (644 aa).

The region spanning 189 to 516 is the RNB domain; the sequence is REDLTALDFV…NHRLLKAVIK (328 aa). The region spanning 561–643 is the S1 motif domain; it reads DTRFAAEIVD…ETRSIIARPV (83 aa).

The protein belongs to the RNR ribonuclease family. RNase II subfamily.

Its subcellular location is the cytoplasm. The enzyme catalyses Exonucleolytic cleavage in the 3'- to 5'-direction to yield nucleoside 5'-phosphates.. In terms of biological role, involved in mRNA degradation. Hydrolyzes single-stranded polyribonucleotides processively in the 3' to 5' direction. This chain is Exoribonuclease 2, found in Escherichia coli (strain UTI89 / UPEC).